A 275-amino-acid polypeptide reads, in one-letter code: Small ribosomal subunit protein uS2 (275 aa).

The interval 232–256 (ARATDGKPEPEPVPGQELGADEPLA) is disordered.

Belongs to the universal ribosomal protein uS2 family.

This Acidothermus cellulolyticus (strain ATCC 43068 / DSM 8971 / 11B) protein is Small ribosomal subunit protein uS2.